We begin with the raw amino-acid sequence, 132 residues long: Large ribosomal subunit protein uL14 (132 aa).

Belongs to the universal ribosomal protein uL14 family. Part of the 50S ribosomal subunit. Forms a cluster with proteins L3 and L24e, part of which may contact the 16S rRNA in 2 intersubunit bridges.

Functionally, binds to 23S rRNA. Forms part of two intersubunit bridges in the 70S ribosome. The protein is Large ribosomal subunit protein uL14 of Methanocella arvoryzae (strain DSM 22066 / NBRC 105507 / MRE50).